Here is a 79-residue protein sequence, read N- to C-terminus: Defensin-like protein 3 (79 aa).

Residues 1 to 29 (MAKFASIVALLFAALVVFAAFEAPTVVEA) form the signal peptide. 4 disulfide bridges follow: Cys-32-Cys-79, Cys-43-Cys-64, Cys-49-Cys-73, and Cys-53-Cys-75.

This sequence belongs to the DEFL family.

It is found in the secreted. Possesses antifungal activity sensitive to inorganic cations. In Raphanus sativus (Radish), this protein is Defensin-like protein 3 (AFP3).